We begin with the raw amino-acid sequence, 276 residues long: Undecaprenyl-diphosphatase 1 (276 aa).

The next 6 membrane-spanning stretches (helical) occupy residues 44–63, 85–105, 109–129, 183–203, 214–234, and 249–269; these read ALAFNIIIQLGAILAVIWEY, VNLLIAFMPAVVLGVAFADLI, LFNPITVAAALVIGGIVMLWA, AATEFSFFLAMPTMVGAAVYS, GDFAVFAIGFVTSFIFAMLAV, and FAWYRIGFGLLILATWQLGMI.

Belongs to the UppP family.

It localises to the cell inner membrane. It catalyses the reaction di-trans,octa-cis-undecaprenyl diphosphate + H2O = di-trans,octa-cis-undecaprenyl phosphate + phosphate + H(+). Catalyzes the dephosphorylation of undecaprenyl diphosphate (UPP). Confers resistance to bacitracin. In Stutzerimonas stutzeri (strain A1501) (Pseudomonas stutzeri), this protein is Undecaprenyl-diphosphatase 1.